The chain runs to 492 residues: 2-succinylbenzoate--CoA ligase (492 aa).

This sequence belongs to the ATP-dependent AMP-binding enzyme family. MenE subfamily.

The catalysed reaction is 2-succinylbenzoate + ATP + CoA = 2-succinylbenzoyl-CoA + AMP + diphosphate. It participates in quinol/quinone metabolism; 1,4-dihydroxy-2-naphthoate biosynthesis; 1,4-dihydroxy-2-naphthoate from chorismate: step 5/7. The protein operates within quinol/quinone metabolism; menaquinone biosynthesis. Functionally, converts 2-succinylbenzoate (OSB) to 2-succinylbenzoyl-CoA (OSB-CoA). This is 2-succinylbenzoate--CoA ligase from Geobacillus sp. (strain WCH70).